Consider the following 465-residue polypeptide: Cysteine--tRNA ligase (465 aa).

Cys27 contributes to the Zn(2+) binding site. Positions 29–39 (PTVYDDAHLGH) match the 'HIGH' region motif. Residues Cys207, His237, and Glu241 each coordinate Zn(2+). A 'KMSKS' region motif is present at residues 269-273 (KMSKS). ATP is bound at residue Lys272.

Belongs to the class-I aminoacyl-tRNA synthetase family. In terms of assembly, monomer. Zn(2+) is required as a cofactor.

The protein resides in the cytoplasm. The enzyme catalyses tRNA(Cys) + L-cysteine + ATP = L-cysteinyl-tRNA(Cys) + AMP + diphosphate. This chain is Cysteine--tRNA ligase, found in Helicobacter pylori (strain G27).